The primary structure comprises 146 residues: Hemoglobin subunit beta (146 aa).

V1 is subject to N-acetylvaline. One can recognise a Globin domain in the interval H2–H146. T12 is modified (phosphothreonine). Position 44 is a phosphoserine (S44). K59 is subject to N6-acetyllysine. H63 contributes to the heme b binding site. K82 is modified (N6-acetyllysine). Residue H92 coordinates heme b. C93 bears the S-nitrosocysteine mark. K144 bears the N6-acetyllysine mark.

The protein belongs to the globin family. In terms of assembly, heterotetramer of two alpha chains and two beta chains. As to expression, red blood cells.

Functionally, involved in oxygen transport from the lung to the various peripheral tissues. This is Hemoglobin subunit beta (HBB) from Leptonychotes weddellii (Weddell seal).